A 111-amino-acid chain; its full sequence is Universal stress protein B (111 aa).

Transmembrane regions (helical) follow at residues 1-21 (MIST…NMAR) and 90-110 (FILT…LMIW).

The protein belongs to the universal stress protein B family.

The protein resides in the cell inner membrane. The sequence is that of Universal stress protein B from Cronobacter sakazakii (strain ATCC BAA-894) (Enterobacter sakazakii).